The chain runs to 185 residues: Ribosome-recycling factor (185 aa).

The disordered stretch occupies residues 137–162 (DSIDKMVKDGEVGEDEGRRAEKELDD).

Belongs to the RRF family.

The protein localises to the cytoplasm. In terms of biological role, responsible for the release of ribosomes from messenger RNA at the termination of protein biosynthesis. May increase the efficiency of translation by recycling ribosomes from one round of translation to another. This is Ribosome-recycling factor from Streptomyces coelicolor (strain ATCC BAA-471 / A3(2) / M145).